The sequence spans 151 residues: Probable cGMP 3',5'-cyclic phosphodiesterase subunit delta (151 aa).

The protein belongs to the PDE6D/unc-119 family. In terms of assembly, interacts with Pde6.

The protein localises to the nucleus. Its subcellular location is the cytoplasm. This Drosophila mojavensis (Fruit fly) protein is Probable cGMP 3',5'-cyclic phosphodiesterase subunit delta.